Reading from the N-terminus, the 140-residue chain is ATP synthase epsilon chain (140 aa).

The protein belongs to the ATPase epsilon chain family. As to quaternary structure, F-type ATPases have 2 components, CF(1) - the catalytic core - and CF(0) - the membrane proton channel. CF(1) has five subunits: alpha(3), beta(3), gamma(1), delta(1), epsilon(1). CF(0) has three main subunits: a, b and c.

It is found in the cell inner membrane. In terms of biological role, produces ATP from ADP in the presence of a proton gradient across the membrane. The sequence is that of ATP synthase epsilon chain from Pseudoalteromonas translucida (strain TAC 125).